Consider the following 1289-residue polypeptide: Trafficking protein particle complex II-specific subunit 120 (1289 aa).

Positions 354-365 (STGISPVDSNSK) are enriched in polar residues. Residues 354–374 (STGISPVDSNSKATASTTASS) form a disordered region. Phosphoserine is present on residues Ser-379 and Ser-387.

It belongs to the TRS120 family. In terms of assembly, part of the multisubunit TRAPP (transport protein particle) II complex composed of BET3, BET5, TRS20, TRS23, TRS31, TRS33, TRS65, TRS120 and TRS130. Interacts directly with TRS65.

The protein resides in the golgi apparatus. The protein localises to the cis-Golgi network. In terms of biological role, specific subunit of the TRAPP II complex, a highly conserved vesicle tethering complex that functions in the late Golgi as a guanine nucleotide exchanger (GEF) for the Golgi YPT1 GTPase. TRS120 plays a role in the YPT GEF activity of TRAPP II in concert with the two other TRAPP II-specific subunits TRS65 and TRS130. The protein is Trafficking protein particle complex II-specific subunit 120 (TRS120) of Saccharomyces cerevisiae (strain ATCC 204508 / S288c) (Baker's yeast).